A 364-amino-acid chain; its full sequence is Ribosomal RNA large subunit methyltransferase M (364 aa).

S-adenosyl-L-methionine contacts are provided by residues Ser-198, 231-234, Asp-250, Asp-270, and Asp-286; that span reads APGG. The Proton acceptor role is filled by Lys-315.

It belongs to the class I-like SAM-binding methyltransferase superfamily. RNA methyltransferase RlmE family. RlmM subfamily. In terms of assembly, monomer.

The protein resides in the cytoplasm. The enzyme catalyses cytidine(2498) in 23S rRNA + S-adenosyl-L-methionine = 2'-O-methylcytidine(2498) in 23S rRNA + S-adenosyl-L-homocysteine + H(+). Functionally, catalyzes the 2'-O-methylation at nucleotide C2498 in 23S rRNA. The protein is Ribosomal RNA large subunit methyltransferase M of Thauera aminoaromatica.